The chain runs to 216 residues: Heart- and neural crest derivatives-expressed protein 2 (216 aa).

Residues 74–115 are disordered; sequence MDHSHYGGVPPGSGPPGLGGPRPVKRRGTANRKERRRTQSIN. Positions 82-93 are enriched in gly residues; sequence VPPGSGPPGLGG. A compositionally biased stretch (basic residues) spans 96–111; sequence PVKRRGTANRKERRRT. Positions 98–150 constitute a bHLH domain; sequence KRRGTANRKERRRTQSINSAFAELRECIPNVPADTKLSKIKTLRLATSYIAYL.

Efficient DNA binding requires dimerization with another bHLH protein.

It is found in the nucleus. Functionally, essential for cardiac morphogenesis. Binds DNA on E-box consensus sequence 5'-CANNTG-3'. Plays an important role in limb development, particularly in the establishment of anterior-posterior polarization of the limb bud. The protein is Heart- and neural crest derivatives-expressed protein 2 (HAND2) of Gallus gallus (Chicken).